A 1230-amino-acid chain; its full sequence is SAM and SH3 domain-containing protein 1 (1230 aa).

Positions methionine 1–proline 10 are enriched in low complexity. The interval methionine 1–valine 30 is disordered. Phosphoserine is present on residues serine 83 and serine 241. Disordered stretches follow at residues arginine 211–valine 249 and lysine 275–tryptophan 337. Over residues lysine 275 to serine 297 the composition is skewed to basic and acidic residues. Positions serine 324–threonine 336 are enriched in low complexity. Phosphoserine is present on serine 400. Disordered regions lie at residues proline 439–aspartate 566, glutamate 610–aspartate 633, and valine 705–aspartate 792. Residues lysine 461–aspartate 470 show a composition bias toward polar residues. A compositionally biased stretch (basic and acidic residues) spans proline 485–lysine 494. Residues glycine 498 to glycine 516 are compositionally biased toward low complexity. The span at glutamine 517–arginine 529 shows a compositional bias: polar residues. The region spanning proline 547–glutamate 608 is the SH3 domain. Positions arginine 615 to arginine 624 are enriched in basic residues. The 65-residue stretch at serine 626–tyrosine 690 folds into the SAM 1 domain. Over residues valine 737–asparagine 758 the composition is skewed to polar residues. A compositionally biased stretch (basic and acidic residues) spans glycine 768–leucine 779. A phosphoserine mark is found at serine 813 and serine 831. Disordered regions lie at residues glutamate 818 to glycine 875 and proline 915 to alanine 1045. A required for interaction with TRAF6 region spans residues asparagine 844–threonine 852. The segment covering threonine 852–threonine 868 has biased composition (polar residues). Residues glycine 940–valine 956 are compositionally biased toward basic and acidic residues. The span at alanine 962–proline 972 shows a compositional bias: polar residues. Low complexity predominate over residues serine 1008–proline 1019. Residues glycine 1160–proline 1224 form the SAM 2 domain.

As to quaternary structure, interacts with GNAS. Interacts with IQGAP1. Interacts with TRAF6 (via C-terminus); the interaction is LPS-dependent. Interacts with MAP3K7, CHUK and IKBKB. Expressed in the microvascular endothelium of various organs, as well as in parenchymal cells. Expressed in the endothelium but not lymphoid cells of spleen and thymus.

The protein resides in the cytoplasm. Functionally, is a positive regulator of NF-kappa-B signaling downstream of TLR4 activation. It acts as a scaffold molecule to assemble a molecular complex that includes TRAF6, MAP3K7, CHUK and IKBKB, thereby facilitating NF-kappa-B signaling activation. Regulates TRAF6 and MAP3K7 ubiquitination. Involved in the regulation of cell mobility. Regulates lipolysaccharide (LPS)-induced endothelial cell migration. Is involved in the regulation of skin pigmentation through the control of melanocyte migration in the epidermis. The sequence is that of SAM and SH3 domain-containing protein 1 (Sash1) from Mus musculus (Mouse).